The sequence spans 88 residues: MLEDTTIHNAITDKALASYFRSSGNLLEEESAVLGQAVTNLMLSGDNVNNKNIILSLIHSLETTSDILKADVIRKTLEIVLRYTADDM.

It belongs to the AriR family. As to quaternary structure, homodimer.

In terms of biological role, regulates expression of genes involved in acid-resistance and biofilm formation. May be a non-specific DNA-binding protein that binds genes and/or intergenic regions via a geometric recognition. The sequence is that of Regulatory protein AriR (ariR) from Escherichia coli O139:H28 (strain E24377A / ETEC).